A 129-amino-acid chain; its full sequence is Large-conductance mechanosensitive channel (129 aa).

A run of 2 helical transmembrane segments spans residues 10-30 (FAVKGNVVDMAVGVIIGGAFG) and 70-90 (AVMLKYGAFIQNVFLLGVIAI).

This sequence belongs to the MscL family. Homopentamer.

It localises to the cell inner membrane. Channel that opens in response to stretch forces in the membrane lipid bilayer. May participate in the regulation of osmotic pressure changes within the cell. In Actinobacillus pleuropneumoniae serotype 3 (strain JL03), this protein is Large-conductance mechanosensitive channel.